A 322-amino-acid chain; its full sequence is tRNA (guanine-N(7)-)-methyltransferase (322 aa).

Residues Glu29, Glu55, and Asp105 each coordinate S-adenosyl-L-methionine. Asp105 is a catalytic residue. Substrate contacts are provided by Lys109 and Asp141.

It belongs to the class I-like SAM-binding methyltransferase superfamily. TrmB family.

It catalyses the reaction guanosine(46) in tRNA + S-adenosyl-L-methionine = N(7)-methylguanosine(46) in tRNA + S-adenosyl-L-homocysteine. The protein operates within tRNA modification; N(7)-methylguanine-tRNA biosynthesis. In terms of biological role, catalyzes the formation of N(7)-methylguanine at position 46 (m7G46) in tRNA. The polypeptide is tRNA (guanine-N(7)-)-methyltransferase (Deinococcus radiodurans (strain ATCC 13939 / DSM 20539 / JCM 16871 / CCUG 27074 / LMG 4051 / NBRC 15346 / NCIMB 9279 / VKM B-1422 / R1)).